Here is a 500-residue protein sequence, read N- to C-terminus: Maturase K (500 aa).

The protein belongs to the intron maturase 2 family. MatK subfamily.

The protein localises to the plastid. Its subcellular location is the chloroplast. Its function is as follows. Usually encoded in the trnK tRNA gene intron. Probably assists in splicing its own and other chloroplast group II introns. The protein is Maturase K of Helianthus annuus (Common sunflower).